We begin with the raw amino-acid sequence, 492 residues long: Catalase (492 aa).

Active-site residues include H65 and N138. Position 348 (Y348) interacts with heme.

Belongs to the catalase family. Homotetramer. Requires heme as cofactor.

Its subcellular location is the cytoplasm. The protein resides in the cytosol. The protein localises to the peroxisome matrix. It carries out the reaction 2 H2O2 = O2 + 2 H2O. Catalyzes the degradation of hydrogen peroxide (H(2)O(2)) generated by peroxisomal oxidases to water and oxygen, thereby protecting cells from the toxic effects of hydrogen peroxide. The chain is Catalase from Vigna radiata var. radiata (Mung bean).